We begin with the raw amino-acid sequence, 284 residues long: Nucleotide-binding protein VF_0384 (284 aa).

8-15 is an ATP binding site; that stretch reads GSSGAGKS. 56–59 lines the GTP pocket; sequence DIRN.

It belongs to the RapZ-like family.

In terms of biological role, displays ATPase and GTPase activities. The sequence is that of Nucleotide-binding protein VF_0384 from Aliivibrio fischeri (strain ATCC 700601 / ES114) (Vibrio fischeri).